Here is a 161-residue protein sequence, read N- to C-terminus: Ribosome maturation factor RimP (161 aa).

The protein belongs to the RimP family.

The protein localises to the cytoplasm. Required for maturation of 30S ribosomal subunits. The sequence is that of Ribosome maturation factor RimP from Rickettsia conorii (strain ATCC VR-613 / Malish 7).